We begin with the raw amino-acid sequence, 213 residues long: Histone H1.1 (213 aa).

The segment at 1–43 is disordered; it reads MSETAPVAQAASTATEKPAAAKKTKKPAKAAAPRKKPAGPSVS. At Ser2 the chain carries N-acetylserine. Ser2 and Ser12 each carry phosphoserine. The segment covering 8-18 has biased composition (low complexity); the sequence is AQAASTATEKP. Lys17 is subject to N6-acetyllysine. Over residues 20 to 37 the composition is skewed to basic residues; the sequence is AAKKTKKPAKAAAPRKKP. Residue Lys36 is modified to N6-(beta-hydroxybutyryl)lysine. Residues 38-111 enclose the H15 domain; that stretch reads AGPSVSELIV…GAAGSFKLNK (74 aa). Position 43 is a phosphoserine (Ser43). Lys54 is subject to N6-(beta-hydroxybutyryl)lysine. Residue Arg56 is modified to Citrulline. Lys66 bears the N6-(beta-hydroxybutyryl)lysine mark. A Phosphoserine modification is found at Ser67. Position 77 is an N6-acetyllysine (Lys77). Position 87 is an N6-(beta-hydroxybutyryl)lysine (Lys87). Position 92 is an N6-(beta-hydroxybutyryl)lysine; alternate (Lys92). The residue at position 92 (Lys92) is an N6-acetyllysine; alternate. Phosphoserine is present on Ser106. Position 108 is an N6-(beta-hydroxybutyryl)lysine (Lys108). The tract at residues 112–213 is disordered; it reads KAESKAITTK…KPKKAAPKKK (102 aa). Positions 120–144 are enriched in low complexity; sequence TKVSVKAKASGAAKKPKKTAGAAAK. Lys121 bears the N6-acetyllysine mark. Basic residues-rich tracts occupy residues 145-178 and 185-213; these read KTVK…KKVA and KAVK…PKKK. Thr201 is modified (phosphothreonine).

It belongs to the histone H1/H5 family. Interacts with DFFB. H1 histones are progressively phosphorylated during the cell cycle, becoming maximally phosphorylated during late G2 phase and M phase, and being dephosphorylated sharply thereafter. In terms of processing, citrullination at Arg-56 (H1R54ci) by PADI4 takes place within the DNA-binding site of H1 and results in its displacement from chromatin and global chromatin decondensation, thereby promoting pluripotency and stem cell maintenance. Post-translationally, hydroxybutyrylation of histones is induced by starvation. In terms of tissue distribution, restricted to thymus, testis and spleen. Present also in lymphocytic and neuronal cells. Increases in testis starting with a low level at day 5 and reaching high concentrations in 20-day old and adult animals.

It is found in the nucleus. The protein localises to the chromosome. Functionally, histone H1 protein binds to linker DNA between nucleosomes forming the macromolecular structure known as the chromatin fiber. Histones H1 are necessary for the condensation of nucleosome chains into higher-order structured fibers. Also acts as a regulator of individual gene transcription through chromatin remodeling, nucleosome spacing and DNA methylation. The sequence is that of Histone H1.1 from Mus musculus (Mouse).